The sequence spans 135 residues: Large ribosomal subunit protein uL16c (135 aa).

This sequence belongs to the universal ribosomal protein uL16 family. Part of the 50S ribosomal subunit.

It localises to the plastid. The protein resides in the chloroplast. This Nymphaea alba (White water-lily) protein is Large ribosomal subunit protein uL16c.